Here is a 316-residue protein sequence, read N- to C-terminus: MRLMKEVRGRNQTEVTEFLLLGLSDNPDLQGVLFALFLLIYMANMVGNLGMIVLIKIDLCLHTPMYFFLSSLSFVDASYSSSVTPKMLVNLMAENKAISFHGCAAQFYFFGSFLGTECFLLAMMAYDRYAAIWNPLLYPVLVSGRICFLLIATSFLAGCGNAAIHTGMTFRLSFCGSNRINHFYCDTPPLLKLSCSDTHFNGIVIMAFSSFIVISCVMIVLISYLCIFIAVLKMPSLEGRHKAFSTCASYLMAVTIFFGTILFMYLRPTSSYSMEQDKVVSVFYTVIIPVLNPLIYSLKNKDVKKALKKILWKHIL.

The Extracellular portion of the chain corresponds to 1–34; it reads MRLMKEVRGRNQTEVTEFLLLGLSDNPDLQGVLF. N-linked (GlcNAc...) asparagine glycosylation is present at Asn11. A helical membrane pass occupies residues 35-55; the sequence is ALFLLIYMANMVGNLGMIVLI. Lys56 is a topological domain (cytoplasmic). A helical membrane pass occupies residues 57 to 77; it reads IDLCLHTPMYFFLSSLSFVDA. Over 78–104 the chain is Extracellular; the sequence is SYSSSVTPKMLVNLMAENKAISFHGCA. A disulfide bridge connects residues Cys103 and Cys195. A helical transmembrane segment spans residues 105–125; it reads AQFYFFGSFLGTECFLLAMMA. Residues 126-135 lie on the Cytoplasmic side of the membrane; sequence YDRYAAIWNP. Residues 136–156 traverse the membrane as a helical segment; sequence LLYPVLVSGRICFLLIATSFL. Topologically, residues 157 to 210 are extracellular; sequence AGCGNAAIHTGMTFRLSFCGSNRINHFYCDTPPLLKLSCSDTHFNGIVIMAFSS. The helical transmembrane segment at 211 to 231 threads the bilayer; that stretch reads FIVISCVMIVLISYLCIFIAV. At 232–245 the chain is on the cytoplasmic side; that stretch reads LKMPSLEGRHKAFS. The helical transmembrane segment at 246 to 266 threads the bilayer; that stretch reads TCASYLMAVTIFFGTILFMYL. The Extracellular portion of the chain corresponds to 267–278; that stretch reads RPTSSYSMEQDK. A helical transmembrane segment spans residues 279-299; sequence VVSVFYTVIIPVLNPLIYSLK. The Cytoplasmic segment spans residues 300–316; it reads NKDVKKALKKILWKHIL.

The protein belongs to the G-protein coupled receptor 1 family.

It is found in the cell membrane. Functionally, odorant receptor. The protein is Olfactory receptor 5AP2 of Homo sapiens (Human).